The sequence spans 355 residues: Protein RecA (355 aa).

Glycine 67 to threonine 74 contacts ATP.

It belongs to the RecA family.

Its subcellular location is the cytoplasm. Can catalyze the hydrolysis of ATP in the presence of single-stranded DNA, the ATP-dependent uptake of single-stranded DNA by duplex DNA, and the ATP-dependent hybridization of homologous single-stranded DNAs. It interacts with LexA causing its activation and leading to its autocatalytic cleavage. The protein is Protein RecA of Shewanella amazonensis (strain ATCC BAA-1098 / SB2B).